A 184-amino-acid chain; its full sequence is uncharacterized protein (184 aa).

An N-terminal signal peptide occupies residues 1–20 (MYQLEKIWVLLCLALVGVLG).

This is an uncharacterized protein from Drosophila melanogaster (Fruit fly).